The sequence spans 273 residues: ATP synthase subunit delta (273 aa).

The interval 55 to 78 is disordered; the sequence is TDPAQSARPRPSSPSVSSAPRSAA. Residues 57-78 show a composition bias toward low complexity; the sequence is PAQSARPRPSSPSVSSAPRSAA.

It belongs to the ATPase delta chain family. As to quaternary structure, F-type ATPases have 2 components, F(1) - the catalytic core - and F(0) - the membrane proton channel. F(1) has five subunits: alpha(3), beta(3), gamma(1), delta(1), epsilon(1). F(0) has three main subunits: a(1), b(2) and c(10-14). The alpha and beta chains form an alternating ring which encloses part of the gamma chain. F(1) is attached to F(0) by a central stalk formed by the gamma and epsilon chains, while a peripheral stalk is formed by the delta and b chains.

Its subcellular location is the cell membrane. Functionally, f(1)F(0) ATP synthase produces ATP from ADP in the presence of a proton or sodium gradient. F-type ATPases consist of two structural domains, F(1) containing the extramembraneous catalytic core and F(0) containing the membrane proton channel, linked together by a central stalk and a peripheral stalk. During catalysis, ATP synthesis in the catalytic domain of F(1) is coupled via a rotary mechanism of the central stalk subunits to proton translocation. Its function is as follows. This protein is part of the stalk that links CF(0) to CF(1). It either transmits conformational changes from CF(0) to CF(1) or is implicated in proton conduction. The protein is ATP synthase subunit delta of Streptomyces lividans.